The following is a 481-amino-acid chain: RAC-beta serine/threonine-protein kinase (481 aa).

Met1 carries the post-translational modification N-acetylmethionine. The PH domain occupies 5-108 (SVIKEGWLHK…WIRAIQMVAN (104 aa)). A Phosphoserine modification is found at Ser34. Cys60 and Cys77 are joined by a disulfide. Phosphoserine is present on Ser126. O-linked (GlcNAc) serine glycosylation is found at Ser128 and Ser131. Positions 152 to 409 (FDYLKLLGKG…AKEVMEHRFF (258 aa)) constitute a Protein kinase domain. Residues 158-166 (LGKGTFGKV) and Lys181 contribute to the ATP site. Asp275 functions as the Proton acceptor in the catalytic mechanism. Mn(2+)-binding residues include Asn280 and Asp293. Thr306 is a glycosylation site (O-linked (GlcNAc) threonine). A Phosphothreonine; by PDPK1 modification is found at Thr309. Residue Thr313 is glycosylated (O-linked (GlcNAc) threonine). The 72-residue stretch at 410-481 (LSINWQDVVQ…QFSYSASIRE (72 aa)) folds into the AGC-kinase C-terminal domain. Ser447 bears the Phosphoserine mark. Position 451 is a phosphothreonine (Thr451). Phosphoserine occurs at positions 461, 474, and 478. Residue Ser474 is glycosylated (O-linked (GlcNAc) serine; alternate).

This sequence belongs to the protein kinase superfamily. AGC Ser/Thr protein kinase family. RAC subfamily. Interacts with BTBD10. Interacts with KCTD20. Interacts (via PH domain) with MTCP1, TCL1A and TCL1B; this interaction may facilitate AKT2 oligomerization and phosphorylation, hence increasing kinase activity. Interacts with PHB2; this interaction may be important for myogenic differentiation. Interacts (when phosphorylated) with CLIP3; this interaction promotes cell membrane localization. Interacts with WDFY2 (via WD repeats 1-3). In terms of processing, phosphorylation on Thr-309 and Ser-474 is required for full activity. Phosphorylation of the activation loop at Thr-309 by PDPK1/PDK1 is a prerequisite for full activation. Phosphorylated and activated by PDPK1/PDK1 in the presence of phosphatidylinositol 3,4,5-trisphosphate. Phosphorylation by mTORC2 in response to growth factors plays a key role in AKT1 activation: mTORC2 phosphorylates different sites depending on the context, such as Ser-474 or Ser-478, thereby facilitating subsequent phosphorylation of the activation loop by PDPK1/PDK1. Post-translationally, ubiquitinated; undergoes both 'Lys-48'- and 'Lys-63'-linked polyubiquitination. TRAF6-induced 'Lys-63'-linked AKT2 ubiquitination. When fully phosphorylated and translocated into the nucleus, undergoes 'Lys-48'-polyubiquitination catalyzed by TTC3, leading to its degradation by the proteasome. O-GlcNAcylation at Thr-306 and Thr-313 inhibits activating phosphorylation at Thr-309 via disrupting the interaction between AKT and PDPK1/PDK1. In terms of tissue distribution, expressed in adipocytes and hepatocytes (at protein level). Expressed at low levels in skeletal muscle (at protein level).

The protein resides in the cytoplasm. It is found in the nucleus. It localises to the cell membrane. Its subcellular location is the early endosome. It catalyses the reaction L-seryl-[protein] + ATP = O-phospho-L-seryl-[protein] + ADP + H(+). The catalysed reaction is L-threonyl-[protein] + ATP = O-phospho-L-threonyl-[protein] + ADP + H(+). Phosphorylation at Thr-309 (in the kinase domain) and Ser-474 (in the C-terminal regulatory region) is required for full activation. In adipocytes and hepatocytes, the activation is induced by insulin. AKT2 phosphorylation of PKP1 is induced by insulin. In terms of biological role, serine/threonine kinase closely related to AKT1 and AKT3. All 3 enzymes, AKT1, AKT2 and AKT3, are collectively known as AKT kinase. AKT regulates many processes including metabolism, proliferation, cell survival, growth and angiogenesis, through the phosphorylation of a range of downstream substrates. Over 100 substrates have been reported so far, although for most of them, the precise AKT kinase catalyzing the reaction was not specified. AKT regulates glucose uptake by mediating insulin-induced translocation of the SLC2A4/GLUT4 glucose transporter to the cell surface. Phosphorylation of PTPN1 at 'Ser-50' negatively modulates its phosphatase activity preventing dephosphorylation of the insulin receptor and the attenuation of insulin signaling. Phosphorylation of TBC1D4 triggers the binding of this effector to inhibitory 14-3-3 proteins, which is required for insulin-stimulated glucose transport. AKT also regulates the storage of glucose in the form of glycogen by phosphorylating GSK3A at 'Ser-21' and GSK3B at 'Ser-9', resulting in inhibition of its kinase activity. Phosphorylation of GSK3 isoforms by AKT is also thought to be one mechanism by which cell proliferation is driven. AKT also regulates cell survival via the phosphorylation of MAP3K5 (apoptosis signal-related kinase). Phosphorylation of 'Ser-83' decreases MAP3K5 kinase activity stimulated by oxidative stress and thereby prevents apoptosis. AKT mediates insulin-stimulated protein synthesis by phosphorylating TSC2 at 'Ser-939' and 'Thr-1462', thereby activating mTORC1 signaling and leading to both phosphorylation of 4E-BP1 and in activation of RPS6KB1. AKT is involved in the phosphorylation of members of the FOXO factors (Forkhead family of transcription factors), leading to binding of 14-3-3 proteins and cytoplasmic localization. In particular, FOXO1 is phosphorylated at 'Thr-24', 'Ser-256' and 'Ser-319'. FOXO3 and FOXO4 are phosphorylated on equivalent sites. AKT has an important role in the regulation of NF-kappa-B-dependent gene transcription and positively regulates the activity of CREB1 (cyclic AMP (cAMP)-response element binding protein). The phosphorylation of CREB1 induces the binding of accessory proteins that are necessary for the transcription of pro-survival genes such as BCL2 and MCL1. AKT phosphorylates 'Ser-454' on ATP citrate lyase (ACLY), thereby potentially regulating ACLY activity and fatty acid synthesis. Activates the 3B isoform of cyclic nucleotide phosphodiesterase (PDE3B) via phosphorylation of 'Ser-273', resulting in reduced cyclic AMP levels and inhibition of lipolysis. Phosphorylates PIKFYVE on 'Ser-318', which results in increased PI(3)P-5 activity. The Rho GTPase-activating protein DLC1 is another substrate and its phosphorylation is implicated in the regulation cell proliferation and cell growth. AKT plays a role as key modulator of the AKT-mTOR signaling pathway controlling the tempo of the process of newborn neurons integration during adult neurogenesis, including correct neuron positioning, dendritic development and synapse formation. Signals downstream of phosphatidylinositol 3-kinase (PI(3)K) to mediate the effects of various growth factors such as platelet-derived growth factor (PDGF), epidermal growth factor (EGF), insulin and insulin-like growth factor 1 (IGF1). AKT mediates the antiapoptotic effects of IGF1. Essential for the SPATA13-mediated regulation of cell migration and adhesion assembly and disassembly. May be involved in the regulation of the placental development. In response to lysophosphatidic acid stimulation, inhibits the ciliogenesis cascade. In this context, phosphorylates WDR44, hence stabilizing its interaction with Rab11 and preventing the formation of the ciliogenic Rab11-FIP3-RAB3IP complex. Also phosphorylates RAB3IP/Rabin8, thus may affect RAB3IP guanine nucleotide exchange factor (GEF) activity toward Rab8, which is important for cilia growth. Phosphorylates PKP1, facilitating its interaction with YWHAG and translocation to the nucleus, ultimately resulting in a reduction in keratinocyte intercellular adhesion. Phosphorylation of PKP1 increases PKP1 protein stability, translocation to the cytoplasm away from desmosome plaques and PKP1-driven cap-dependent translation. Functionally, several AKT2-specific substrates have been identified, including ANKRD2, C2CD5, CLK2 and PITX2. May play a role in myoblast differentiation. In this context, may act through PITX2 phosphorylation. Unphosphorylated PITX2 associates with an ELAVL1/HuR-containing complex, which stabilizes cyclin mRNA and ensuring cell proliferation. Phosphorylation by AKT2 impairs this association, leading to CCND1 mRNA destabilization and progression towards differentiation. Also involved in the negative regulation of myogenesis in response to stress conditions. In this context, acts by phosphorylating ANKRD2. May also be a key regulator of glucose uptake. Regulates insulin-stimulated glucose transport by the increase of glucose transporter GLUT4 translocation from intracellular stores to the plasma membrane. In this context, acts by phosphorylating C2CD5/CDP138 on 'Ser-197' in insulin-stimulated adipocytes. Through the phosphorylation of CLK2 on 'Thr-343', involved in insulin-regulated suppression of hepatic gluconeogenesis. This is RAC-beta serine/threonine-protein kinase from Rattus norvegicus (Rat).